Consider the following 302-residue polypeptide: Sulfate adenylyltransferase subunit 2 (302 aa).

Belongs to the PAPS reductase family. CysD subfamily. In terms of assembly, heterodimer composed of CysD, the smaller subunit, and CysN.

The enzyme catalyses sulfate + ATP + H(+) = adenosine 5'-phosphosulfate + diphosphate. The protein operates within sulfur metabolism; hydrogen sulfide biosynthesis; sulfite from sulfate: step 1/3. In terms of biological role, with CysN forms the ATP sulfurylase (ATPS) that catalyzes the adenylation of sulfate producing adenosine 5'-phosphosulfate (APS) and diphosphate, the first enzymatic step in sulfur assimilation pathway. APS synthesis involves the formation of a high-energy phosphoric-sulfuric acid anhydride bond driven by GTP hydrolysis by CysN coupled to ATP hydrolysis by CysD. The chain is Sulfate adenylyltransferase subunit 2 from Shigella boydii serotype 4 (strain Sb227).